A 1260-amino-acid chain; its full sequence is Methionine synthase (1260 aa).

The Hcy-binding domain maps to 13 to 333 (FGIIRKILSE…DHIRAFCNAI (321 aa)). Residues Cys255, Cys318, and Cys319 each coordinate Zn(2+). In terms of domain architecture, Pterin-binding spans 364 to 625 (FVNVGERCNV…IPKDLLKLVE (262 aa)). One can recognise a B12-binding N-terminal domain in the interval 655–749 (EVEEWRNKPV…FMEEEKRLKR (95 aa)). Methylcob(III)alamin-binding positions include Glu699, 775 to 779 (GDVHD), His778, Ser823, Thr827, and Ala879. Residues 766-883 (GVVVLATVKG…VHVLDASRSV (118 aa)) enclose the B12-binding domain. In terms of domain architecture, AdoMet activation spans 916–1256 (SLKDRKYTSL…LSSILSYDRL (341 aa)). S-adenosyl-L-methionine is bound by residues Asp966, Arg1163, and 1218 to 1219 (YF).

This sequence belongs to the vitamin-B12 dependent methionine synthase family. Methylcob(III)alamin serves as cofactor. Zn(2+) is required as a cofactor.

The catalysed reaction is (6S)-5-methyl-5,6,7,8-tetrahydrofolate + L-homocysteine = (6S)-5,6,7,8-tetrahydrofolate + L-methionine. Its pathway is amino-acid biosynthesis; L-methionine biosynthesis via de novo pathway; L-methionine from L-homocysteine (MetH route): step 1/1. In terms of biological role, catalyzes the transfer of a methyl group from methyl-cobalamin to homocysteine, yielding enzyme-bound cob(I)alamin and methionine. Subsequently, remethylates the cofactor using methyltetrahydrofolate. This chain is Methionine synthase (mtr), found in Dictyostelium discoideum (Social amoeba).